The following is a 396-amino-acid chain: Putative 3-phosphoinositide-dependent protein kinase 2 (396 aa).

Over residues 1–11 the composition is skewed to polar residues; that stretch reads MVRTQTESSTP. Positions 1 to 53 are disordered; sequence MVRTQTESSTPPGIPGGSRQGPAMDGTAAEPRPGAGSLQHAQPPPQPRKKRPE. One can recognise a Protein kinase domain in the interval 55 to 315; that stretch reads FKFGKILGEG…YGPLKAHPFF (261 aa). ATP contacts are provided by residues 65-67 and lysine 84; that span reads SFS. A PIF-pocket region spans residues 86–130; that stretch reads LEKRHIIKENKVPYVTRERDVMSRLDHPFFVKLYFTFQDDEKLYF. ATP contacts are provided by residues 133 to 135 and glutamate 139; that span reads SYA. Catalysis depends on aspartate 178, which acts as the Proton acceptor. 2 residues coordinate ATP: glutamate 182 and aspartate 196.

The protein belongs to the protein kinase superfamily. AGC Ser/Thr protein kinase family. PDPK1 subfamily. Phosphorylated on tyrosine and serine/threonine.

It localises to the cytoplasm. The protein localises to the membrane. It carries out the reaction L-seryl-[protein] + ATP = O-phospho-L-seryl-[protein] + ADP + H(+). The enzyme catalyses L-threonyl-[protein] + ATP = O-phospho-L-threonyl-[protein] + ADP + H(+). Its function is as follows. Phosphorylates and activates not only PKB/AKT, but also PKA, PKC-zeta, RPS6KA1 and RPS6KB1. May play a general role in signaling processes and in development. The protein is Putative 3-phosphoinositide-dependent protein kinase 2 of Homo sapiens (Human).